A 114-amino-acid polypeptide reads, in one-letter code: Large ribosomal subunit protein uL22 (114 aa).

It belongs to the universal ribosomal protein uL22 family. As to quaternary structure, part of the 50S ribosomal subunit.

Its function is as follows. This protein binds specifically to 23S rRNA; its binding is stimulated by other ribosomal proteins, e.g. L4, L17, and L20. It is important during the early stages of 50S assembly. It makes multiple contacts with different domains of the 23S rRNA in the assembled 50S subunit and ribosome. Functionally, the globular domain of the protein is located near the polypeptide exit tunnel on the outside of the subunit, while an extended beta-hairpin is found that lines the wall of the exit tunnel in the center of the 70S ribosome. In Streptococcus pneumoniae (strain Taiwan19F-14), this protein is Large ribosomal subunit protein uL22.